The sequence spans 279 residues: Isopentenyl-diphosphate delta-isomerase idi1 (279 aa).

Residue Lys78 participates in substrate binding. His82 and His93 together coordinate Mg(2+). In terms of domain architecture, Nudix hydrolase spans 91 to 249; the sequence is LLHRAFSVFL…GLKFTPWFKL (159 aa). Positions 111 and 116 each coordinate substrate. The active site involves Cys128. Ser129 serves as a coordination point for substrate. The short motif at 129 to 162 is the Nudix box element; that stretch reads SHPLGIPGETGAELDAAVLGVKRAAQRKLDQELG. Mg(2+) contacts are provided by Glu191 and Glu193. The active site involves Glu193.

It belongs to the IPP isomerase type 1 family. Mg(2+) serves as cofactor.

The catalysed reaction is isopentenyl diphosphate = dimethylallyl diphosphate. Its pathway is isoprenoid biosynthesis; dimethylallyl diphosphate biosynthesis; dimethylallyl diphosphate from isopentenyl diphosphate: step 1/1. Functionally, isopentenyl-diphosphate delta-isomerase; part of the second module of ergosterol biosynthesis pathway that includes the middle steps of the pathway. Idi1 catalyzes the 1,3-allylic rearrangement of isopentenyl (IPP) to its highly electrophilic allylic isomer, dimethylallyl diphosphate (DMAPP). The second module is carried out in the vacuole and involves the formation of farnesyl diphosphate, which is also an important intermediate in the biosynthesis of ubiquinone, dolichol, heme and prenylated proteins. Activity by the mevalonate kinase erg12 (AFUA_4G07780) first converts mevalonate into 5-phosphomevalonate. 5-phosphomevalonate is then further converted to 5-diphosphomevalonate by the phosphomevalonate kinase erg8 (AFUA_5G10680). The diphosphomevalonate decarboxylase mvd1 (AFUA_4G07130) then produces isopentenyl diphosphate. The isopentenyl-diphosphate delta-isomerase idi1 (AFUA_6G11160) then catalyzes the 1,3-allylic rearrangement of the homoallylic substrate isopentenyl (IPP) to its highly electrophilic allylic isomer, dimethylallyl diphosphate (DMAPP). Finally the farnesyl diphosphate synthase erg20 (AFUA_5G02450) catalyzes the sequential condensation of isopentenyl pyrophosphate with dimethylallyl pyrophosphate, and then with the resultant geranylpyrophosphate to the ultimate product farnesyl pyrophosphate. The protein is Isopentenyl-diphosphate delta-isomerase idi1 of Aspergillus fumigatus (strain ATCC MYA-4609 / CBS 101355 / FGSC A1100 / Af293) (Neosartorya fumigata).